Consider the following 450-residue polypeptide: Glucose-6-phosphate isomerase (450 aa).

Threonine 39 is subject to Phosphothreonine. The Proton donor role is filled by glutamate 291. Catalysis depends on residues histidine 312 and lysine 426.

It belongs to the GPI family.

The protein resides in the cytoplasm. The enzyme catalyses alpha-D-glucose 6-phosphate = beta-D-fructose 6-phosphate. It functions in the pathway carbohydrate biosynthesis; gluconeogenesis. It participates in carbohydrate degradation; glycolysis; D-glyceraldehyde 3-phosphate and glycerone phosphate from D-glucose: step 2/4. Its function is as follows. Catalyzes the reversible isomerization of glucose-6-phosphate to fructose-6-phosphate. This chain is Glucose-6-phosphate isomerase, found in Bacillus cereus (strain AH187).